The chain runs to 245 residues: Transmembrane and ubiquitin-like domain-containing protein 1 (245 aa).

The tract at residues 2–30 (ALIEGVGDEVTVLFAVLACLLVLALAWVS) is required to release iHOPS from membranes. The chain crosses the membrane as a helical span at residues 11-31 (VTVLFAVLACLLVLALAWVST). Residues 33-100 (TTESTDPQPQ…ASTPPDSPQE (68 aa)) form a disordered region. 3 positions are modified to phosphoserine: Ser-73, Ser-97, and Ser-126. The region spanning 102–175 (LLLRLKFLND…LHCHVSTRVG (74 aa)) is the Ubiquitin-like domain. 2 helical membrane passes run 194 to 214 (IGSLLLPLLLLLLLLLWYCQI) and 219 to 239 (FFPLTATLGLAGFTLLLSLLA).

As to quaternary structure, interacts with EEF1A1, CAMLG, GRIA2 and GRIP1. Interacts with NPM1 and CDKN2A; TMUB1 can enhance interaction between NPM1 and CDKN2A and is proposed to bridge the proteins; proposed to be mediated by iHOPS. Interacts with TUBG1. Interacts with ERLIN2 and AMFR; TMUB1 promotes the interaction of ERLIN2 with AMFR. Isoform 1 (lHOPS) is processed by regulated intramembrane proteolysis (RIP) in the N-terminus to release iHOPS from membranes. Post-translationally, isoform 2 seems to undergo a selective cleavage in the C-terminal region to release an additional cytoplasmic form. In terms of tissue distribution, expressed in adult brain; at protein level. Isoform 1 (lHOPS) is highly expressed in small intestine, stomach and epididymis. Isoform 2 (sHOPS) and iHOPS are abundantly expressed in brain, liver and adrenal gland.

The protein localises to the membrane. Its subcellular location is the postsynaptic cell membrane. It localises to the recycling endosome. The protein resides in the cytoplasm. It is found in the nucleus. The protein localises to the nucleolus. Its subcellular location is the cytoskeleton. It localises to the microtubule organizing center. The protein resides in the centrosome. Functionally, involved in sterol-regulated ubiquitination and degradation of HMG-CoA reductase HMGCR. Involved in positive regulation of AMPA-selective glutamate receptor GRIA2 recycling to the cell surface. Acts as a negative regulator of hepatocyte growth during regeneration. In terms of biological role, may contribute to the regulation of translation during cell-cycle progression. May contribute to the regulation of cell proliferation. May be involved in centrosome assembly. Modulates stabilization and nucleolar localization of tumor suppressor CDKN2A and enhances association between CDKN2A and NPM1. This chain is Transmembrane and ubiquitin-like domain-containing protein 1 (Tmub1), found in Mus musculus (Mouse).